The chain runs to 189 residues: Stathmin-4 (189 aa).

S-palmitoyl cysteine attachment occurs at residues cysteine 20 and cysteine 22. The SLD domain occupies 48 to 189; that stretch reads SDMEVIELNK…NKELKEEASR (142 aa). 2 positions are modified to phosphoserine: glutamate 54 and serine 90. Residues 90–189 adopt a coiled-coil conformation; it reads SLEEIQKKLE…NKELKEEASR (100 aa). The disordered stretch occupies residues 168–189; that stretch reads QEKDKHAEEVRKNKELKEEASR.

Belongs to the stathmin family. As to expression, nervous tissue.

It is found in the golgi apparatus. The protein resides in the cell projection. The protein localises to the growth cone. It localises to the axon. Its function is as follows. Exhibits microtubule-destabilizing activity. The chain is Stathmin-4 (Stmn4) from Rattus norvegicus (Rat).